A 547-amino-acid chain; its full sequence is Sodium-coupled neutral amino acid transporter 4 (547 aa).

The interval 1 to 30 (MDPMELRNVNIEPDDESSSGESAPDSYIGI) is disordered. Over 1–104 (MDPMELRNVN…GLSYAMANTG (104 aa)) the chain is Extracellular. Serine 49 bears the Phosphoserine mark. A helical transmembrane segment spans residues 105–125 (IILFIIMLLAVAILSLYSVHL). Over 126–151 (LLKTAKEGGSLIYEKLGEKAFGWPGK) the chain is Cytoplasmic. Residues 152 to 172 (IGAFVSITMQNIGAMSSYLFI) form a helical membrane-spanning segment. The Extracellular segment spans residues 173-195 (IKYELPEVIRAFMGLEENTGEWY). A helical membrane pass occupies residues 196 to 216 (LNGNYLIIFVSVGIILPLSLL). Residues 217 to 220 (KNLG) are Cytoplasmic-facing. Residues 221-241 (YLGYTSGFSLTCMVFFVSVVI) form a helical membrane-spanning segment. The Extracellular segment spans residues 242–332 (YKKFQIPCPL…PKYFVFNSRT (91 aa)). Cysteine 249 and cysteine 321 form a disulfide bridge. Asparagine 260, asparagine 264, and asparagine 276 each carry an N-linked (GlcNAc...) asparagine glycan. A helical transmembrane segment spans residues 333-353 (AYAIPILVFAFVCHPEVLPIY). Topologically, residues 354-369 (SELKDRSRRKMQTVSN) are cytoplasmic. The helical transmembrane segment at 370-390 (ISITGMLVMYLLAALFGYLTF) threads the bilayer. Residues 391–411 (YGEVEDELLHAYSKVYTLDIP) lie on the Extracellular side of the membrane. The helical transmembrane segment at 412-432 (LLMVRLAVLVAVTLTVPIVLF) threads the bilayer. The Cytoplasmic portion of the chain corresponds to 433–453 (PIRTSVITLLFPKRPFSWIRH). Residues 454-474 (FLIAAVLIALNNVLVILVPTI) traverse the membrane as a helical segment. At 475-476 (KY) the chain is on the extracellular side. Residues 477–497 (IFGFIGASSATMLIFILPAVF) form a helical membrane-spanning segment. Topologically, residues 498 to 514 (YLKLVKKETFRSPQKVG) are cytoplasmic. A helical membrane pass occupies residues 515-535 (ALIFLVVGIFFMIGSMALIII). The Extracellular segment spans residues 536–547 (DWIYDPPNSKHH).

Belongs to the amino acid/polyamine transporter 2 family. The disulfide bond plays an important role in substrate transport, but has no effect on trafficking to the cell surface. As to expression, expressed almost exclusively in embryonic and adult liver, and at lower levels in the kidney. Expressed at lower levels in adult muscle and pancreas. Detected in fetal blood vessels. Expressed in syncytiotrophoblas of placenta during first trimester and at term. Highly expressed in first trimester placenta compared to term placenta.

It localises to the cell membrane. The protein localises to the cell projection. The protein resides in the microvillus membrane. The catalysed reaction is L-methionine(in) + Na(+)(in) = L-methionine(out) + Na(+)(out). It catalyses the reaction L-asparagine(in) + Na(+)(in) = L-asparagine(out) + Na(+)(out). It carries out the reaction L-threonine(in) + Na(+)(in) = L-threonine(out) + Na(+)(out). The enzyme catalyses L-serine(in) + Na(+)(in) = L-serine(out) + Na(+)(out). The catalysed reaction is glycine(in) + Na(+)(in) = glycine(out) + Na(+)(out). It catalyses the reaction L-alanine(in) + Na(+)(in) = L-alanine(out) + Na(+)(out). It carries out the reaction L-glutamine(in) + Na(+)(in) = L-glutamine(out) + Na(+)(out). The enzyme catalyses L-histidine(in) + Na(+)(in) = L-histidine(out) + Na(+)(out). The catalysed reaction is L-cysteine(in) + Na(+)(in) = L-cysteine(out) + Na(+)(out). It catalyses the reaction L-proline(in) + Na(+)(in) = L-proline(out) + Na(+)(out). Its function is as follows. Symporter that cotransports neutral amino acids and sodium ions from the extraccellular to the intracellular side of the cell membrane. The transport is electrogenic, pH dependent and partially tolerates substitution of Na(+) by Li(+). Preferentially transports smaller amino acids, such as glycine, L-alanine, L-serine, L-asparagine and L-threonine, followed by L-cysteine, L-histidine, L-proline and L-glutamine and L-methionine. The chain is Sodium-coupled neutral amino acid transporter 4 from Homo sapiens (Human).